The sequence spans 698 residues: MSNINKTTQDVIVGDKTLSLETGWVAKQADGSVIARMGDTMVLATAVSDKVQKPGISDFVPLTVNYKERTYAAGKIPGGFFKRESRASKKETLASRIIDRSLRPLFPSGYTCETNVTAMVLSADGVYDTEVLAVMASSTALIISSIPFTTPVAAVRIGRLNGNFIVNPTLEEQKSCDMDLIISGSLEGMLMVEGGAKEVSEEDVIKALETAKPAIDILCKAQLELKEKAGKEKFSFQAETVPQDVVDLGNNKYRAEVANILNAFYDKQTRDVKIAELKAAFAEEIKEAHGDNASTFAGITMENLSYEESRKLVLEKGVRVDGRKTDEIRQLNSITGLLPRAHGSALFTRGQTQGLVVTTLGTSGDAQLVESLEESYDETFMLHYNFPGFSTGECKPDRAPGRREIGHGELARRALLPLIPDADKFPYTIRVVSDIMESNGSSSMASVCGGSLSLFDAGVPMKAACSGIAMGLIKEGDKYAVLSDIMGLEDHLGDMDFKLTGSRNGITAFQMDVKLAGGISIEILKEAVAQATKGRMHIMDHMDSVLPEPRKDVSKFAPVIYTMRIPQDKIGALIGPGGKNIKRITETTDTKIDINDDGVVQIAAVNGDKLAMAKAEIELLTAEVELNKIYKGKVVSIQPFGAFVELIPGKDGLLHISEIDKKRINKVEDVLKMGDIVEVKVVEIDNNGKVRLSRKVLL.

Residues Asp-490 and Asp-496 each coordinate Mg(2+). The KH domain occupies 558-617 (PVIYTMRIPQDKIGALIGPGGKNIKRITETTDTKIDINDDGVVQIAAVNGDKLAMAKAEI). In terms of domain architecture, S1 motif spans 627–695 (NKIYKGKVVS…NNGKVRLSRK (69 aa)).

The protein belongs to the polyribonucleotide nucleotidyltransferase family. Mg(2+) is required as a cofactor.

It localises to the cytoplasm. The catalysed reaction is RNA(n+1) + phosphate = RNA(n) + a ribonucleoside 5'-diphosphate. Functionally, involved in mRNA degradation. Catalyzes the phosphorolysis of single-stranded polyribonucleotides processively in the 3'- to 5'-direction. In Elusimicrobium minutum (strain Pei191), this protein is Polyribonucleotide nucleotidyltransferase.